A 385-amino-acid chain; its full sequence is Glucans biosynthesis protein C (385 aa).

The next 10 helical transmembrane spans lie at 17 to 37 (AWLM…SHTW), 60 to 80 (MQVF…RYPL), 91 to 111 (VGIP…IMLQ), 137 to 157 (ISHL…VWIF), 173 to 193 (KFSM…YAVI), 212 to 232 (FIVM…LAFI), 239 to 259 (LFTT…VAYL), 274 to 294 (TESV…FSFG), 311 to 331 (ASLF…AYIT), and 338 to 358 (WLGF…LYEI).

It belongs to the acyltransferase 3 family. OpgC subfamily.

The protein resides in the cell membrane. It functions in the pathway glycan metabolism; osmoregulated periplasmic glucan (OPG) biosynthesis. Necessary for the succinyl substitution of periplasmic glucans. Could catalyze the transfer of succinyl residues from the cytoplasmic side of the membrane to the nascent glucan backbones on the periplasmic side of the membrane. The chain is Glucans biosynthesis protein C from Escherichia coli O45:K1 (strain S88 / ExPEC).